Here is a 463-residue protein sequence, read N- to C-terminus: Protoheme IX farnesyltransferase (463 aa).

The segment at 1 to 193 (MAESRTFTGL…AYFRLMKPRL (193 aa)) is unknown. The next 4 membrane-spanning stretches (helical) occupy residues 6-26 (TFTG…LAGA), 54-74 (LLVA…VVAM), 89-109 (AAII…AIVA), and 115-135 (ALPG…VLAL). The interval 144–170 (GSDDETPVKNPTPAPEPAGDDTPDRTP) is disordered. 9 consecutive transmembrane segments (helical) span residues 193-213 (LMWL…GQTL), 218-238 (VLLT…FNHV), 265-285 (ALAF…QVNA), 286-306 (LVAV…TLVL), 314-334 (TVLG…AADG), 336-356 (VGLP…AHFY), 387-407 (IVYY…LTPL), 409-429 (WLYA…VVLL), and 441-461 (AFHA…VDAL). The segment at 194–460 (MWLLCLVAAA…AVLIAIVVDA (267 aa)) is protoheme IX prenyltransferase.

This sequence in the C-terminal section; belongs to the UbiA prenyltransferase family. Protoheme IX farnesyltransferase subfamily.

Its subcellular location is the cell membrane. It carries out the reaction heme b + (2E,6E)-farnesyl diphosphate + H2O = Fe(II)-heme o + diphosphate. Its pathway is porphyrin-containing compound metabolism; heme O biosynthesis; heme O from protoheme: step 1/1. Converts heme B (protoheme IX) to heme O by substitution of the vinyl group on carbon 2 of heme B porphyrin ring with a hydroxyethyl farnesyl side group. The chain is Protoheme IX farnesyltransferase (ctaB) from Haloarcula marismortui (strain ATCC 43049 / DSM 3752 / JCM 8966 / VKM B-1809) (Halobacterium marismortui).